The primary structure comprises 240 residues: Ribonuclease 3 (240 aa).

The RNase III domain occupies 9–141 (VEEFQKKTGI…LLAAIYLDQG (133 aa)). Glutamate 54 is a binding site for Mg(2+). Aspartate 58 is a catalytic residue. Mg(2+)-binding residues include aspartate 127 and glutamate 130. Glutamate 130 is a catalytic residue. The DRBM domain maps to 168–237 (DYKTALQEIV…ARIAYEKLLK (70 aa)).

The protein belongs to the ribonuclease III family. As to quaternary structure, homodimer. Requires Mg(2+) as cofactor.

The protein resides in the cytoplasm. It catalyses the reaction Endonucleolytic cleavage to 5'-phosphomonoester.. In terms of biological role, digests double-stranded RNA. Involved in the processing of primary rRNA transcript to yield the immediate precursors to the large and small rRNAs (23S and 16S). Processes some mRNAs, and tRNAs when they are encoded in the rRNA operon. Processes pre-crRNA and tracrRNA of type II CRISPR loci if present in the organism. This is Ribonuclease 3 from Thermotoga petrophila (strain ATCC BAA-488 / DSM 13995 / JCM 10881 / RKU-1).